Reading from the N-terminus, the 1129-residue chain is MPATRKPMRYGHTEGHTEVCFDDSGSFIVTCGSDGDVRIWEDLDDDDPKFINVGEKAYSCALKSGKLVTAVSNNTIQVHTFPEGVPDGILTRFTTNANHVVFNGDGTKIAAGSSDFLVKIVDVMDSSQQKTFRGHDAPVLSLSFDPKDIFLASASCDGSVRVWQISDQTCAISWPLLQKCNDVINAKSICRLAWQPKSGKLLAIPVEKSVKLYRRESWSHQFDLSDNFISQTLNIVTWSPCGQYLAAGSINGLIIVWNVETKDCMERVKHEKGYAICGLAWHPTCGRISYTDAEGNLGLLENVCDPSGKTSSSKVSSRVEKDYNDLFDGDDMSNAGDFLNDNAVEIPSFSKGIINDDEDDEDLMMASGRPRQRSHILEDDENSVDISMLKTGSSLLKEEEEDGQEGSIHNLPLVTSQRPFYDGPMPTPRQKPFQSGSTPLHLTHRFMVWNSIGIIRCYNDEQDNAIDVEFHDTSIHHATHLSNTLNYTIADLSHEAILLACESTDELASKLHCLHFSSWDSSKEWIIDLPQNEDIEAICLGQGWAAAATSALLLRLFTIGGVQKEVFSLAGPVVSMAGHGEQLFIVYHRGTGFDGDQCLGVQLLELGKKKKQILHGDPLPLTRKSYLAWIGFSAEGTPCYVDSEGIVRMLNRGLGNTWTPICNTREHCKGKSDHYWVVGIHENPQQLRCIPCKGSRFPPTLPRPAVAILSFKLPYCQIATEKGQMEEQFWRSVIFHNHLDYLAKNGYEYEESTKNQATKEQQELLMKMLALSCKLEREFRCVELADLMTQNAVNLAIKYASRSRKLILAQKLSELAVEKAAELTATQVEEEEEEEDFRKKLNAGYSNTATEWSQPRFRNQVEEDAEDSGEADDEEKPEIHKPGQNSFSKSTNSSDVSAKSGAVTFSSQGRVNPFKVSASSKEPAMSMNSARSTNILDNMGKSSKKSTALSRTTNNEKSPIIKPLIPKPKPKQASAASYFQKRNSQTNKTEEVKEENLKNVLSETPAICPPQNTENQRPKTGFQMWLEENRSNILSDNPDFSDEADIIKEGMIRFRVLSTEERKVWANKAKGETASEGTEAKKRKRVVDESDETENQEEKAKENLNLSKKQKPLDFSTNQKLSAFAFKQE.

WD repeat units lie at residues 11–50 (GHTE…DPKF), 52–91 (NVGE…GILT), 92–131 (RFTT…QQKT), 134–173 (GHDA…CAIS), 184–223 (INAK…HQFD), 228–267 (FISQ…CMER), and 271–310 (EKGY…SGKT). Phosphoserine occurs at positions 333, 374, 383, and 387. A Glycyl lysine isopeptide (Lys-Gly) (interchain with G-Cter in SUMO2) cross-link involves residue Lys397. Lys671 bears the N6-acetyllysine mark. A phosphothreonine mark is found at Thr824 and Thr826. Positions 848–857 (TATEWSQPRF) are enriched in polar residues. Disordered stretches follow at residues 848-897 (TATE…SDVS) and 916-1017 (VSAS…ENQR). The segment covering 862-876 (EEDAEDSGEADDEEK) has biased composition (acidic residues). Phosphoserine is present on Ser868. The segment covering 883 to 897 (GQNSFSKSTNSSDVS) has biased composition (polar residues). Phosphoserine is present on residues Ser917, Ser919, and Ser932. Polar residues-rich tracts occupy residues 926 to 936 (SMNSARSTNIL) and 945 to 956 (KSTALSRTTNNE). Position 962 is an N6-acetyllysine (Lys962). Positions 974 to 987 (SAASYFQKRNSQTN) are enriched in polar residues. Position 984 is a phosphoserine (Ser984). Residues 988 to 997 (KTEEVKEENL) show a composition bias toward basic and acidic residues. The segment at residues 1016 to 1079 (QRPKTGFQMW…KGETASEGTE (64 aa)) is a DNA-binding region (HMG box). 2 positions are modified to phosphoserine: Ser1041 and Ser1090. The segment at 1068–1113 (KAKGETASEGTEAKKRKRVVDESDETENQEEKAKENLNLSKKQKPL) is disordered. Residue Lys1127 forms a Glycyl lysine isopeptide (Lys-Gly) (interchain with G-Cter in SUMO1); alternate linkage. Lys1127 is covalently cross-linked (Glycyl lysine isopeptide (Lys-Gly) (interchain with G-Cter in SUMO2); alternate).

As to quaternary structure, trimer. Interacts with the polymerase alpha catalytic subunit POLA1. Interacts with MCM10. Interacts with DNA2. Interacts with CDC45 and GINS2 subunit of GINS complex; these interactions associate WDHD1 with the CMG helicase complex.

It is found in the nucleus. The protein resides in the nucleoplasm. In terms of biological role, core replisome component that acts as a replication initiation factor. Binds directly to the CMG complex and functions as a hub to recruit additional proteins to the replication fork. This is WD repeat and HMG-box DNA-binding protein 1 from Homo sapiens (Human).